We begin with the raw amino-acid sequence, 399 residues long: Argininosuccinate synthase (399 aa).

Residues 10–18 (AYSGGVDTS) and A38 each bind ATP. Y89 is an L-citrulline binding site. G119 provides a ligand contact to ATP. 3 residues coordinate L-aspartate: T121, N125, and D126. An L-citrulline-binding site is contributed by N125. R129, S177, S186, E262, and Y274 together coordinate L-citrulline.

It belongs to the argininosuccinate synthase family. Type 1 subfamily. Homotetramer.

It is found in the cytoplasm. It catalyses the reaction L-citrulline + L-aspartate + ATP = 2-(N(omega)-L-arginino)succinate + AMP + diphosphate + H(+). It functions in the pathway amino-acid biosynthesis; L-arginine biosynthesis; L-arginine from L-ornithine and carbamoyl phosphate: step 2/3. The sequence is that of Argininosuccinate synthase from Acaryochloris marina (strain MBIC 11017).